Reading from the N-terminus, the 423-residue chain is MAVEDDVSLIRTTTLVAPTRPTITVPHRPPAIETAAYFFGGGDGLSLSPGPLSFVSSLFVDNFPDVLTPDNQRTTSFTHLLTSPMFFPPQSSAHTGFIQPRQQSQPQPQRPDTFPHHMPPSTSVAVHGRQSLDVSQVDQRARNHYNNPGNNNNNRSYNVVNVDKPADDGYNWRKYGQKPIKGCEYPRSYYKCTHVNCPVKKKVERSSDGQITQIIYKGQHDHERPQNRRGGGGRDSTEVGGAGQMMESSDDSGYRKDHDDDDDDDEDDEDLPASKIRRIDGVSTTHRTVTEPKIIVQTKSEVDLLDDGYRWRKYGQKVVKGNPHPRSYYKCTTPNCTVRKHVERASTDAKAVITTYEGKHNHDVPAARNGTAAATAAAVGPSDHHRMRSMSGNNMQQHMSFGNNNNTGQSPVLLRLKEEKITI.

Disordered regions lie at residues 91 to 128 (SSAH…AVHG), 142 to 171 (RNHY…DGYN), and 215 to 284 (IYKG…GVST). Low complexity-rich tracts occupy residues 99–111 (QPRQ…PQRP) and 144–162 (HYNN…VVNV). A DNA-binding region (WRKY 1) is located at residues 161–225 (NVDKPADDGY…YKGQHDHERP (65 aa)). Acidic residues predominate over residues 259–271 (DDDDDDDEDDEDL). The WRKY 2 DNA-binding region spans 300–365 (SEVDLLDDGY…YEGKHNHDVP (66 aa)).

The protein localises to the nucleus. Transcription factor. Interacts specifically with the W box (5'-(T)TGAC[CT]-3'), a frequently occurring elicitor-responsive cis-acting element. The protein is Probable WRKY transcription factor 58 (WRKY58) of Arabidopsis thaliana (Mouse-ear cress).